The chain runs to 134 residues: Large ribosomal subunit protein uL16c (134 aa).

The tract at residues 1–22 (MLSPKRTRFRKQHRGRMKGISH) is disordered.

Belongs to the universal ribosomal protein uL16 family. Part of the 50S ribosomal subunit.

Its subcellular location is the plastid. The protein resides in the chloroplast. The sequence is that of Large ribosomal subunit protein uL16c from Nicotiana tabacum (Common tobacco).